Here is a 449-residue protein sequence, read N- to C-terminus: Putative F-box/FBD/LRR-repeat protein At3g49480 (449 aa).

Residues 11–59 form the F-box domain; the sequence is EDRISSLPDDLLVKILLCVPTKDAAATTFLSKRWRFVWRMLPRLNYIET. 6 LRR repeats span residues 60–91, 153–180, 182–206, 235–260, 275–302, and 327–352; these read TSDV…WIDL, RLTL…DLFC, VYKD…KVTR, FRED…HIFD, VTVV…ALSP, and SEYD…LVDS. One can recognise an FBD domain in the interval 364 to 412; it reads WNQPSSIPRCLSSHLEIFEWDGYVGREDEKKIIRYILENSKYLKTAGIS.

This chain is Putative F-box/FBD/LRR-repeat protein At3g49480, found in Arabidopsis thaliana (Mouse-ear cress).